The chain runs to 393 residues: Na(+)/H(+) antiporter NhaA (393 aa).

Helical transmembrane passes span 23–43 (AGGI…NSPF), 58–78 (LSLA…LVGL), 96–116 (MLPG…FAVL), 126–146 (GWAV…SLLG), 155–175 (VFLA…IAIF), 178–198 (AEIS…LFVM), 201–221 (MGVV…FFVF), 224–244 (GVHA…KPAP), 265–285 (VAFI…FKGL), 298–318 (ILLG…WLAI), 334–354 (LYGV…IGLL), and 367–387 (IGVL…LRAA).

The protein belongs to the NhaA Na(+)/H(+) (TC 2.A.33) antiporter family.

It localises to the cell inner membrane. The enzyme catalyses Na(+)(in) + 2 H(+)(out) = Na(+)(out) + 2 H(+)(in). Functionally, na(+)/H(+) antiporter that extrudes sodium in exchange for external protons. The polypeptide is Na(+)/H(+) antiporter NhaA (Brucella canis (strain ATCC 23365 / NCTC 10854 / RM-666)).